The sequence spans 79 residues: Alpha-actitoxin-Ms11a-4 (79 aa).

The signal sequence occupies residues 1-23 (MKVLVAVLVFALLMCMFVDIAES). A propeptide spanning residues 24–46 (RRRDNPEYPSGLRYDEEMGVFKR) is cleaved from the precursor. Disulfide bonds link Cys-47–Cys-61, Cys-54–Cys-67, and Cys-60–Cys-76. Tyrosine amide is present on Tyr-78.

It is found in the secreted. Its subcellular location is the nematocyst. Its function is as follows. Alpha-toxins act on postsynaptic membranes, they bind to the nicotinic acetylcholine receptors (nAChR) and thus inhibit them. This toxin very weakly competes with alpha-bungarotoxin for binding to orthosteric sites on muscle-type T.carlifornicus (IC(50)=14.95 uM) and human alpha-7/CHRNA7 nAChRs (IC(50)&gt;45 uM). The polypeptide is Alpha-actitoxin-Ms11a-4 (Metridium senile (Brown sea anemone)).